The sequence spans 337 residues: Anthranilate phosphoribosyltransferase (337 aa).

5-phospho-alpha-D-ribose 1-diphosphate contacts are provided by residues Gly-81, Gly-84 to Asp-85, Thr-89, Asn-91 to Thr-94, Lys-109 to Ser-117, and Thr-121. An anthranilate-binding site is contributed by Gly-81. Ser-93 contributes to the Mg(2+) binding site. Asn-112 is an anthranilate binding site. Arg-167 is an anthranilate binding site. Residues Asp-225 and Glu-226 each contribute to the Mg(2+) site.

This sequence belongs to the anthranilate phosphoribosyltransferase family. In terms of assembly, homodimer. The cofactor is Mg(2+).

The enzyme catalyses N-(5-phospho-beta-D-ribosyl)anthranilate + diphosphate = 5-phospho-alpha-D-ribose 1-diphosphate + anthranilate. Its pathway is amino-acid biosynthesis; L-tryptophan biosynthesis; L-tryptophan from chorismate: step 2/5. Catalyzes the transfer of the phosphoribosyl group of 5-phosphorylribose-1-pyrophosphate (PRPP) to anthranilate to yield N-(5'-phosphoribosyl)-anthranilate (PRA). This chain is Anthranilate phosphoribosyltransferase, found in Sinorhizobium medicae (strain WSM419) (Ensifer medicae).